The sequence spans 200 residues: Molybdenum cofactor guanylyltransferase (200 aa).

GTP contacts are provided by residues 10–12 (LAG), Lys23, Asn51, Asp69, and Asp99. A Mg(2+)-binding site is contributed by Asp99.

Belongs to the MobA family. As to quaternary structure, monomer. Mg(2+) serves as cofactor.

It localises to the cytoplasm. The catalysed reaction is Mo-molybdopterin + GTP + H(+) = Mo-molybdopterin guanine dinucleotide + diphosphate. Its function is as follows. Transfers a GMP moiety from GTP to Mo-molybdopterin (Mo-MPT) cofactor (Moco or molybdenum cofactor) to form Mo-molybdopterin guanine dinucleotide (Mo-MGD) cofactor. This is Molybdenum cofactor guanylyltransferase from Shewanella pealeana (strain ATCC 700345 / ANG-SQ1).